Here is a 208-residue protein sequence, read N- to C-terminus: Protein-L-isoaspartate O-methyltransferase (208 aa).

Residue Ser-59 is part of the active site.

The protein belongs to the methyltransferase superfamily. L-isoaspartyl/D-aspartyl protein methyltransferase family.

It is found in the cytoplasm. It catalyses the reaction [protein]-L-isoaspartate + S-adenosyl-L-methionine = [protein]-L-isoaspartate alpha-methyl ester + S-adenosyl-L-homocysteine. Its function is as follows. Catalyzes the methyl esterification of L-isoaspartyl residues in peptides and proteins that result from spontaneous decomposition of normal L-aspartyl and L-asparaginyl residues. It plays a role in the repair and/or degradation of damaged proteins. This is Protein-L-isoaspartate O-methyltransferase from Citrobacter koseri (strain ATCC BAA-895 / CDC 4225-83 / SGSC4696).